Reading from the N-terminus, the 561-residue chain is Dihydroxy-acid dehydratase (561 aa).

C50 contributes to the [2Fe-2S] cluster binding site. D82 is a Mg(2+) binding site. C123 provides a ligand contact to [2Fe-2S] cluster. Mg(2+) is bound by residues D124 and K125. K125 is modified (N6-carboxylysine). A [2Fe-2S] cluster-binding site is contributed by C195. E447 contacts Mg(2+). S473 acts as the Proton acceptor in catalysis.

Belongs to the IlvD/Edd family. Homodimer. It depends on [2Fe-2S] cluster as a cofactor. Mg(2+) is required as a cofactor.

The enzyme catalyses (2R)-2,3-dihydroxy-3-methylbutanoate = 3-methyl-2-oxobutanoate + H2O. It carries out the reaction (2R,3R)-2,3-dihydroxy-3-methylpentanoate = (S)-3-methyl-2-oxopentanoate + H2O. It participates in amino-acid biosynthesis; L-isoleucine biosynthesis; L-isoleucine from 2-oxobutanoate: step 3/4. The protein operates within amino-acid biosynthesis; L-valine biosynthesis; L-valine from pyruvate: step 3/4. Functions in the biosynthesis of branched-chain amino acids. Catalyzes the dehydration of (2R,3R)-2,3-dihydroxy-3-methylpentanoate (2,3-dihydroxy-3-methylvalerate) into 2-oxo-3-methylpentanoate (2-oxo-3-methylvalerate) and of (2R)-2,3-dihydroxy-3-methylbutanoate (2,3-dihydroxyisovalerate) into 2-oxo-3-methylbutanoate (2-oxoisovalerate), the penultimate precursor to L-isoleucine and L-valine, respectively. This chain is Dihydroxy-acid dehydratase, found in Chloroflexus aurantiacus (strain ATCC 29366 / DSM 635 / J-10-fl).